A 268-amino-acid chain; its full sequence is Putative hydro-lyase Arad_8587 (268 aa).

The protein belongs to the D-glutamate cyclase family.

This Rhizobium rhizogenes (strain K84 / ATCC BAA-868) (Agrobacterium radiobacter) protein is Putative hydro-lyase Arad_8587.